Here is a 921-residue protein sequence, read N- to C-terminus: Ubiquitin carboxyl-terminal hydrolase 11 (921 aa).

The segment covering 1–16 (MAAVAADPAAAAVPAS) has biased composition (low complexity). Positions 1–29 (MAAVAADPAAAAVPASAEDRETQPEAMPD) are disordered. Residues 28–133 (PDLDQQWRQI…DQPPIERKVI (106 aa)) form the DUSP domain. Lysine 194 carries the post-translational modification N6-acetyllysine. The USP domain occupies 257–889 (CGLTNLGNTC…AAYVLFYQRQ (633 aa)). Cysteine 266 functions as the Nucleophile in the catalytic mechanism. Positions 592–697 (TKPTSDDDDG…DRTTSPEEAQ (106 aa)) are disordered. Serine 596 is modified (phosphoserine). The segment covering 597 to 624 (DDDDGDEKGDENEDEDVEDDSSSEEEKE) has biased composition (acidic residues). Polar residues-rich tracts occupy residues 657–666 (LDNSLHTSQW) and 676–697 (FTLQ…EEAQ). Phosphoserine is present on serine 692. Residue histidine 847 is the Proton acceptor of the active site. The segment at 893–921 (RRQSQTASSETPTSPASSSTPNSDIMDVN) is disordered. Positions 895-915 (QSQTASSETPTSPASSSTPNS) are enriched in low complexity. Serine 906 carries the phosphoserine modification.

It belongs to the peptidase C19 family. Monomer. Associated component of the Polycomb group (PcG) multiprotein PRC1-like complex. Interacts with RANBP9/RANBPM. Interacts with BRCA2. Interacts with CHUK/IKKA. Interacts with NFKBIA. Interacts with SPRY3, RAE1, MYCBP2/PAM, and KCTD6.

The protein localises to the nucleus. It is found in the cytoplasm. Its subcellular location is the chromosome. The enzyme catalyses Thiol-dependent hydrolysis of ester, thioester, amide, peptide and isopeptide bonds formed by the C-terminal Gly of ubiquitin (a 76-residue protein attached to proteins as an intracellular targeting signal).. Functionally, protease that can remove conjugated ubiquitin from target proteins and polyubiquitin chains. Inhibits the degradation of target proteins by the proteasome. Cleaves preferentially 'Lys-6' and 'Lys-63'-linked ubiquitin chains. Has lower activity with 'Lys-11' and 'Lys-33'-linked ubiquitin chains, and extremely low activity with 'Lys-27', 'Lys-29' and 'Lys-48'-linked ubiquitin chains (in vitro). Plays a role in the regulation of pathways leading to NF-kappa-B activation. Plays a role in the regulation of DNA repair after double-stranded DNA breaks. Acts as a chromatin regulator via its association with the Polycomb group (PcG) multiprotein PRC1-like complex; may act by deubiquitinating components of the PRC1-like comple. Promotes cell proliferation by deubiquitinating phosphorylated E2F1x. The protein is Ubiquitin carboxyl-terminal hydrolase 11 of Rattus norvegicus (Rat).